We begin with the raw amino-acid sequence, 275 residues long: Large ribosomal subunit protein uL2 (275 aa).

Disordered stretches follow at residues 28-59 (KPYA…GGHK) and 224-275 (AMNP…RHKR). The segment covering 35–46 (DTQSSTAGRNNN) has biased composition (polar residues). A compositionally biased stretch (basic residues) spans 50–59 (TTRHKGGGHK).

Belongs to the universal ribosomal protein uL2 family. As to quaternary structure, part of the 50S ribosomal subunit. Forms a bridge to the 30S subunit in the 70S ribosome.

One of the primary rRNA binding proteins. Required for association of the 30S and 50S subunits to form the 70S ribosome, for tRNA binding and peptide bond formation. It has been suggested to have peptidyltransferase activity; this is somewhat controversial. Makes several contacts with the 16S rRNA in the 70S ribosome. This Paraburkholderia phymatum (strain DSM 17167 / CIP 108236 / LMG 21445 / STM815) (Burkholderia phymatum) protein is Large ribosomal subunit protein uL2.